Reading from the N-terminus, the 527-residue chain is Pentatricopeptide repeat-containing protein At4g25270, chloroplastic (527 aa).

The N-terminal 47 residues, 1 to 47 (MVSIVVHKPSFSYPSVSSSSMKKKPRHHQQLKQHRQNQYNNNGFTSL), are a transit peptide targeting the chloroplast. The tract at residues 12–44 (SYPSVSSSSMKKKPRHHQQLKQHRQNQYNNNGF) is disordered. The span at 21–35 (MKKKPRHHQQLKQHR) shows a compositional bias: basic residues. PPR repeat units follow at residues 126–156 (NLGI…MSKR), 159–193 (SPFA…GVKP), 194–228 (DRFT…GFGY), 229–259 (DVYV…IPHK), 260–294 (DYVS…GIEP), 295–326 (DKVA…GMEW), 327–361 (ELSV…DTVS), 367–389 (SAHS…NAKP), 390–425 (DGIT…GIDP), and 426–457 (KMEH…MGLE). The segment at 462–527 (VWGALLYACY…QMMVDRGLET (66 aa)) is type E motif; degenerate.

It belongs to the PPR family. PCMP-E subfamily.

It is found in the plastid. The protein localises to the chloroplast. In Arabidopsis thaliana (Mouse-ear cress), this protein is Pentatricopeptide repeat-containing protein At4g25270, chloroplastic (PCMP-E53).